The primary structure comprises 681 residues: Propionyl-CoA carboxylase alpha chain (681 aa).

Positions 1–466 constitute a Biotin carboxylation domain; it reads MFNKILIANR…TTAFIAEEYP (466 aa). ATP is bound by residues Lys-116, 148–209, Glu-200, and Asn-235; that span reads SNQI…PRHI. An ATP-grasp domain is found at 120-317; sequence KKIAQEANVS…LVEQMIRVAA (198 aa). Glu-275, Glu-288, and Asn-290 together coordinate Mg(2+). 3 residues coordinate Mn(2+): Glu-275, Glu-288, and Asn-290. The active site involves Glu-288. Position 348 (Phe-348) interacts with biotin. The Biotinyl-binding domain maps to 602 to 681; it reads LMPEKLPPDT…AVDDVIMEFE (80 aa). Lys-647 is modified (N6-biotinyllysine).

As to quaternary structure, the holoenzyme is a dodecamer composed of 6 PccA/alpha subunits and 6 PccB/beta subunits. Mg(2+) serves as cofactor. It depends on Mn(2+) as a cofactor. Biotin is required as a cofactor. The biotin cofactor is covalently attached to the C-terminal biotinyl-binding domain and is required for the catalytic activity.

It catalyses the reaction propanoyl-CoA + hydrogencarbonate + ATP = (S)-methylmalonyl-CoA + ADP + phosphate + H(+). It participates in metabolic intermediate metabolism; propanoyl-CoA degradation; succinyl-CoA from propanoyl-CoA: step 1/3. In terms of biological role, this is one of the 2 subunits of the biotin-dependent propionyl-CoA carboxylase (PCC), the enzyme catalyzing the carboxylation of propionyl-CoA/propanoyl-CoA to D-methylmalonyl-CoA/(S)-methylmalonyl-CoA. Within the holoenzyme, the alpha subunit catalyzes the ATP-dependent carboxylation of the biotin carried by the biotin carboxyl carrier (BCC) domain, while the beta subunit then tranfers the carboxyl group from carboxylated biotin to propionyl-CoA. This is Propionyl-CoA carboxylase alpha chain from Ruegeria pomeroyi (strain ATCC 700808 / DSM 15171 / DSS-3) (Silicibacter pomeroyi).